We begin with the raw amino-acid sequence, 538 residues long: Bifunctional purine biosynthesis protein PurH (538 aa).

The region spanning Lys6–Val158 is the MGS-like domain.

The protein belongs to the PurH family.

It carries out the reaction (6R)-10-formyltetrahydrofolate + 5-amino-1-(5-phospho-beta-D-ribosyl)imidazole-4-carboxamide = 5-formamido-1-(5-phospho-D-ribosyl)imidazole-4-carboxamide + (6S)-5,6,7,8-tetrahydrofolate. The catalysed reaction is IMP + H2O = 5-formamido-1-(5-phospho-D-ribosyl)imidazole-4-carboxamide. Its pathway is purine metabolism; IMP biosynthesis via de novo pathway; 5-formamido-1-(5-phospho-D-ribosyl)imidazole-4-carboxamide from 5-amino-1-(5-phospho-D-ribosyl)imidazole-4-carboxamide (10-formyl THF route): step 1/1. The protein operates within purine metabolism; IMP biosynthesis via de novo pathway; IMP from 5-formamido-1-(5-phospho-D-ribosyl)imidazole-4-carboxamide: step 1/1. The polypeptide is Bifunctional purine biosynthesis protein PurH (Brucella anthropi (strain ATCC 49188 / DSM 6882 / CCUG 24695 / JCM 21032 / LMG 3331 / NBRC 15819 / NCTC 12168 / Alc 37) (Ochrobactrum anthropi)).